The sequence spans 434 residues: ATP-dependent protease ATPase subunit HslU (434 aa).

ATP contacts are provided by residues Ile-18, 60 to 65, Asp-247, Glu-312, and Arg-384; that span reads GVGKTE.

Belongs to the ClpX chaperone family. HslU subfamily. As to quaternary structure, a double ring-shaped homohexamer of HslV is capped on each side by a ring-shaped HslU homohexamer. The assembly of the HslU/HslV complex is dependent on binding of ATP.

The protein localises to the cytoplasm. Its function is as follows. ATPase subunit of a proteasome-like degradation complex; this subunit has chaperone activity. The binding of ATP and its subsequent hydrolysis by HslU are essential for unfolding of protein substrates subsequently hydrolyzed by HslV. HslU recognizes the N-terminal part of its protein substrates and unfolds these before they are guided to HslV for hydrolysis. The chain is ATP-dependent protease ATPase subunit HslU from Brucella melitensis biotype 2 (strain ATCC 23457).